A 246-amino-acid chain; its full sequence is Probable transcriptional regulatory protein Ent638_2432 (246 aa).

This sequence belongs to the TACO1 family.

Its subcellular location is the cytoplasm. This is Probable transcriptional regulatory protein Ent638_2432 from Enterobacter sp. (strain 638).